A 79-amino-acid polypeptide reads, in one-letter code: Sperm-specific basic nuclear protein SP4 (79 aa).

The disordered stretch occupies residues Met-1–Ser-79. The span at Arg-9 to Ala-60 shows a compositional bias: basic residues. 2 consecutive repeats follow at residues Arg-45–Ala-52 and Arg-53–Ala-60. Residues Arg-61–Ser-79 show a composition bias toward basic and acidic residues.

Its subcellular location is the nucleus. This is Sperm-specific basic nuclear protein SP4 (sp4-a) from Xenopus laevis (African clawed frog).